The sequence spans 234 residues: Glucosamine-6-phosphate deaminase (234 aa).

Asp62 (proton acceptor; for enolization step) is an active-site residue. Asn128 acts as the For ring-opening step in catalysis. His130 functions as the Proton acceptor; for ring-opening step in the catalytic mechanism. Catalysis depends on Glu135, which acts as the For ring-opening step.

It belongs to the glucosamine/galactosamine-6-phosphate isomerase family. NagB subfamily.

It carries out the reaction alpha-D-glucosamine 6-phosphate + H2O = beta-D-fructose 6-phosphate + NH4(+). The protein operates within amino-sugar metabolism; N-acetylneuraminate degradation; D-fructose 6-phosphate from N-acetylneuraminate: step 5/5. Its function is as follows. Catalyzes the reversible isomerization-deamination of glucosamine 6-phosphate (GlcN6P) to form fructose 6-phosphate (Fru6P) and ammonium ion. This is Glucosamine-6-phosphate deaminase from Streptococcus equi subsp. equi (strain 4047).